We begin with the raw amino-acid sequence, 404 residues long: MTDIQADPAVTAADAAQADTSSPTAHQGKPANAIGLVVPERMHFAEPLQLRNGSQICGYDLMVETYGTLNADRSNAVLICHALNASHHVAGVHAEGEVGWWDNMVGPGKPVDTNRFFVIGVNNLGSCFGSTGPMSPHPETGLPYGARFPVVTVEDWVNAQARVADRFGIEQFAAVMGGSLGGMQALAWSLMYPDRLRHCVVVASTPKLSAQNIAFNEVARSAILSDPDFHGGDYYAHNVKPKRGLRVARMIGHITYLSDEDMAAKFGRELKAEDIRFSFDVEFQVESYLRYQGDKFAEYFDANTYLLITRALDYFDPALAYGGSLTKAVAHTKASYLVVSFMTDWRFAPARSRELVKALLDNKHPVTYGEIDAPHGHDAFLLEDARYHALVRAYYERIAQEIGA.

The segment covering 1-25 (MTDIQADPAVTAADAAQADTSSPTA) has biased composition (low complexity). Positions 1 to 30 (MTDIQADPAVTAADAAQADTSSPTAHQGKP) are disordered. In terms of domain architecture, AB hydrolase-1 spans 75-384 (NAVLICHALN…HGHDAFLLED (310 aa)). Ser-179 serves as the catalytic Nucleophile. Arg-249 serves as a coordination point for substrate. Residues Asp-344 and His-377 contribute to the active site. Asp-378 is a substrate binding site.

The protein belongs to the AB hydrolase superfamily. MetX family. As to quaternary structure, homodimer.

Its subcellular location is the cytoplasm. It carries out the reaction L-homoserine + succinyl-CoA = O-succinyl-L-homoserine + CoA. It participates in amino-acid biosynthesis; L-methionine biosynthesis via de novo pathway; O-succinyl-L-homoserine from L-homoserine: step 1/1. Functionally, transfers a succinyl group from succinyl-CoA to L-homoserine, forming succinyl-L-homoserine. This Ralstonia pickettii (strain 12J) protein is Homoserine O-succinyltransferase.